The following is a 315-amino-acid chain: Transaldolase (315 aa).

Catalysis depends on K125, which acts as the Schiff-base intermediate with substrate.

This sequence belongs to the transaldolase family. Type 1 subfamily. Homodimer.

It is found in the cytoplasm. It catalyses the reaction D-sedoheptulose 7-phosphate + D-glyceraldehyde 3-phosphate = D-erythrose 4-phosphate + beta-D-fructose 6-phosphate. The protein operates within carbohydrate degradation; pentose phosphate pathway; D-glyceraldehyde 3-phosphate and beta-D-fructose 6-phosphate from D-ribose 5-phosphate and D-xylulose 5-phosphate (non-oxidative stage): step 2/3. In terms of biological role, transaldolase is important for the balance of metabolites in the pentose-phosphate pathway. This chain is Transaldolase, found in Paracidovorax citrulli (strain AAC00-1) (Acidovorax citrulli).